We begin with the raw amino-acid sequence, 312 residues long: MRNILTIFLLTSTFFTGILWIIDHILLIKNYFYNKKKTKNNNTILINKVILENKKCFFRSLSSLFPTFFIVFIIRSFIYEPFQIPSGSMMPTLLIGDFILVKKFSYGIKEPITNKTIIKMNLPQRGDIVVFKHPKNNIDYIKRVVGLPGDKIQYDINRKKIKICINYTNQKNCENKLFITYSKPKLSNFFQKIYLLKSRTNEEEKVYNSIYFKKVEEKINNLKHNILILDGINSKINDYYQQKGMPKLIWIVPKNKYFMMGDNRDNSLDSRYWGFVPEENLLGKATKIWMSFEKKENEWPTGIRIKRIGNIY.

The helical transmembrane segment at 7–27 (IFLLTSTFFTGILWIIDHILL) threads the bilayer. At 28-63 (IKNYFYNKKKTKNNNTILINKVILENKKCFFRSLSS) the chain is on the cytoplasmic side. A helical transmembrane segment spans residues 64 to 84 (LFPTFFIVFIIRSFIYEPFQI). Topologically, residues 85–312 (PSGSMMPTLL…IRIKRIGNIY (228 aa)) are extracellular. Catalysis depends on residues Ser-88 and Lys-142.

It belongs to the peptidase S26 family.

The protein localises to the cell membrane. The enzyme catalyses Cleavage of hydrophobic, N-terminal signal or leader sequences from secreted and periplasmic proteins.. This is Signal peptidase I (lepB) from Buchnera aphidicola subsp. Schizaphis graminum (strain Sg).